Here is a 30-residue protein sequence, read N- to C-terminus: Bacteriocin SRCAM 37 (30 aa).

It belongs to the bacteriocin class IIA/YGNGV family.

It localises to the secreted. Bacteriocin with antibacterial activity against C.jejuni. This Paenibacillus polymyxa (Bacillus polymyxa) protein is Bacteriocin SRCAM 37.